Here is a 115-residue protein sequence, read N- to C-terminus: Large ribosomal subunit protein bL19 (115 aa).

The protein belongs to the bacterial ribosomal protein bL19 family.

Its function is as follows. This protein is located at the 30S-50S ribosomal subunit interface and may play a role in the structure and function of the aminoacyl-tRNA binding site. In Enterobacter sp. (strain 638), this protein is Large ribosomal subunit protein bL19.